Consider the following 229-residue polypeptide: Triosephosphate isomerase (229 aa).

Residue 6–8 (NFK) coordinates substrate. His-88 functions as the Electrophile in the catalytic mechanism. Residue Glu-157 is the Proton acceptor of the active site. Substrate contacts are provided by Gly-163 and Ser-193.

It belongs to the triosephosphate isomerase family. As to quaternary structure, homodimer.

The protein localises to the cytoplasm. The catalysed reaction is D-glyceraldehyde 3-phosphate = dihydroxyacetone phosphate. It functions in the pathway carbohydrate biosynthesis; gluconeogenesis. It participates in carbohydrate degradation; glycolysis; D-glyceraldehyde 3-phosphate from glycerone phosphate: step 1/1. Functionally, involved in the gluconeogenesis. Catalyzes stereospecifically the conversion of dihydroxyacetone phosphate (DHAP) to D-glyceraldehyde-3-phosphate (G3P). The chain is Triosephosphate isomerase from Sulfurovum sp. (strain NBC37-1).